Here is a 199-residue protein sequence, read N- to C-terminus: Imidazole glycerol phosphate synthase subunit HisH 2 (199 aa).

Residues 1–199 (MIAVIDVSGN…NNFLSLESTC (199 aa)) enclose the Glutamine amidotransferase type-1 domain. Cysteine 76 serves as the catalytic Nucleophile. Residues histidine 177 and glutamate 179 contribute to the active site.

In terms of assembly, heterodimer of HisH and HisF.

It localises to the cytoplasm. It catalyses the reaction 5-[(5-phospho-1-deoxy-D-ribulos-1-ylimino)methylamino]-1-(5-phospho-beta-D-ribosyl)imidazole-4-carboxamide + L-glutamine = D-erythro-1-(imidazol-4-yl)glycerol 3-phosphate + 5-amino-1-(5-phospho-beta-D-ribosyl)imidazole-4-carboxamide + L-glutamate + H(+). The enzyme catalyses L-glutamine + H2O = L-glutamate + NH4(+). It functions in the pathway amino-acid biosynthesis; L-histidine biosynthesis; L-histidine from 5-phospho-alpha-D-ribose 1-diphosphate: step 5/9. In terms of biological role, IGPS catalyzes the conversion of PRFAR and glutamine to IGP, AICAR and glutamate. The HisH subunit provides the glutamine amidotransferase activity that produces the ammonia necessary to HisF for the synthesis of IGP and AICAR. This Legionella pneumophila subsp. pneumophila (strain Philadelphia 1 / ATCC 33152 / DSM 7513) protein is Imidazole glycerol phosphate synthase subunit HisH 2.